The chain runs to 78 residues: Acyl carrier protein (78 aa).

The region spanning 2-77 (STIEESVKAI…AAIDFIQASQ (76 aa)) is the Carrier domain. The residue at position 37 (Ser37) is an O-(pantetheine 4'-phosphoryl)serine.

This sequence belongs to the acyl carrier protein (ACP) family. Post-translationally, 4'-phosphopantetheine is transferred from CoA to a specific serine of apo-ACP by AcpS. This modification is essential for activity because fatty acids are bound in thioester linkage to the sulfhydryl of the prosthetic group.

Its subcellular location is the cytoplasm. The protein operates within lipid metabolism; fatty acid biosynthesis. Its function is as follows. Carrier of the growing fatty acid chain in fatty acid biosynthesis. This chain is Acyl carrier protein, found in Sodalis glossinidius (strain morsitans).